The chain runs to 470 residues: Ribulose bisphosphate carboxylase large chain (470 aa).

Position 5 is an N6,N6,N6-trimethyllysine (Lys5). Substrate-binding residues include Asn114 and Thr164. Residue Lys166 is the Proton acceptor of the active site. A substrate-binding site is contributed by Lys168. Lys192, Asp194, and Glu195 together coordinate Mg(2+). N6-carboxylysine is present on Lys192. His285 acts as the Proton acceptor in catalysis. The substrate site is built by Arg286, His318, and Ser370.

This sequence belongs to the RuBisCO large chain family. Type I subfamily. As to quaternary structure, heterohexadecamer of 8 large chains and 8 small chains; disulfide-linked. The disulfide link is formed within the large subunit homodimers. It depends on Mg(2+) as a cofactor. In terms of processing, the disulfide bond which can form in the large chain dimeric partners within the hexadecamer appears to be associated with oxidative stress and protein turnover.

Its subcellular location is the plastid. The protein resides in the chloroplast. The catalysed reaction is 2 (2R)-3-phosphoglycerate + 2 H(+) = D-ribulose 1,5-bisphosphate + CO2 + H2O. The enzyme catalyses D-ribulose 1,5-bisphosphate + O2 = 2-phosphoglycolate + (2R)-3-phosphoglycerate + 2 H(+). In terms of biological role, ruBisCO catalyzes two reactions: the carboxylation of D-ribulose 1,5-bisphosphate, the primary event in carbon dioxide fixation, as well as the oxidative fragmentation of the pentose substrate in the photorespiration process. Both reactions occur simultaneously and in competition at the same active site. The polypeptide is Ribulose bisphosphate carboxylase large chain (Kigelia africana (Sausage tree)).